The chain runs to 456 residues: Cysteine--tRNA ligase (456 aa).

Cys-28 serves as a coordination point for Zn(2+). The short motif at 30 to 40 (ITVYDHCHLGH) is the 'HIGH' region element. Residues Cys-209, His-234, and Glu-238 each coordinate Zn(2+). A 'KMSKS' region motif is present at residues 266–270 (KMAKS). An ATP-binding site is contributed by Lys-269.

This sequence belongs to the class-I aminoacyl-tRNA synthetase family. As to quaternary structure, monomer. It depends on Zn(2+) as a cofactor.

It is found in the cytoplasm. It carries out the reaction tRNA(Cys) + L-cysteine + ATP = L-cysteinyl-tRNA(Cys) + AMP + diphosphate. In Legionella pneumophila (strain Corby), this protein is Cysteine--tRNA ligase.